Here is a 484-residue protein sequence, read N- to C-terminus: Aldehyde dehydrogenase family 3 member A2 (484 aa).

Residues 1–463 (MERQVLRLRQ…FLLKQFNKGR (463 aa)) lie on the Cytoplasmic side of the membrane. 185–190 (GNTAVG) lines the NAD(+) pocket. Active-site residues include Glu-207 and Cys-241. The residue at position 293 (Ser-293) is a Phosphoserine. Residues 464–484 (LGMLLFVCLVAVAAVIVKDQL) form a helical membrane-spanning segment. The Prevents secretion from ER signature appears at 481-484 (KDQL).

Belongs to the aldehyde dehydrogenase family. Homodimer.

Its subcellular location is the membrane. It localises to the microsome membrane. The protein localises to the endoplasmic reticulum membrane. It carries out the reaction an aldehyde + NAD(+) + H2O = a carboxylate + NADH + 2 H(+). It catalyses the reaction a fatty aldehyde + NAD(+) + H2O = a fatty acid + NADH + 2 H(+). The catalysed reaction is hexadecanoate + NADH + 2 H(+) = hexadecanal + NAD(+) + H2O. The enzyme catalyses octanal + NAD(+) + H2O = octanoate + NADH + 2 H(+). It carries out the reaction (2E)-hexadecenal + NAD(+) + H2O = (E)-hexadec-2-enoate + NADH + 2 H(+). It catalyses the reaction 22-oxodocosanoate + NAD(+) + H2O = docosanedioate + NADH + 2 H(+). The catalysed reaction is 2,6,10,14-tetramethylpentadecanal + NAD(+) + H2O = 2,6,10,14-tetramethylpentadecanoate + NADH + 2 H(+). The enzyme catalyses octadecanal + NAD(+) + H2O = octadecanoate + NADH + 2 H(+). It carries out the reaction dodecanoate + NADH + 2 H(+) = dodecanal + NAD(+) + H2O. It catalyses the reaction decanal + NAD(+) + H2O = decanoate + NADH + 2 H(+). The catalysed reaction is tetradecanal + NAD(+) + H2O = tetradecanoate + NADH + 2 H(+). The enzyme catalyses heptanal + NAD(+) + H2O = heptanoate + NADH + 2 H(+). It carries out the reaction (2E,6E)-farnesal + NAD(+) + H2O = (2E,6E)-farnesoate + NADH + 2 H(+). Catalyzes the oxidation of medium and long-chain aliphatic aldehydes to fatty acids. Active on a variety of saturated and unsaturated aliphatic aldehydes between 6 and 24 carbons in length. Responsible for conversion of the sphingosine 1-phosphate (S1P) degradation product hexadecenal to hexadecenoic acid. In Mus musculus (Mouse), this protein is Aldehyde dehydrogenase family 3 member A2 (Aldh3a2).